The primary structure comprises 151 residues: Large ribosomal subunit protein uL13 (151 aa).

It belongs to the universal ribosomal protein uL13 family. In terms of assembly, part of the 50S ribosomal subunit.

This protein is one of the early assembly proteins of the 50S ribosomal subunit, although it is not seen to bind rRNA by itself. It is important during the early stages of 50S assembly. This chain is Large ribosomal subunit protein uL13, found in Synechococcus sp. (strain JA-3-3Ab) (Cyanobacteria bacterium Yellowstone A-Prime).